The chain runs to 445 residues: Adenine permease AdeP (445 aa).

Over 1–28 (MSHQHTTQTSGQGMLERVFKLREHGTTA) the chain is Cytoplasmic. Residues 29-52 (RTEVIAGFTTFLTMVYIVFVNPQI) traverse the membrane as a helical segment. Residues 53–62 (LGVAGMDTSA) lie on the Periplasmic side of the membrane. The chain crosses the membrane as a helical span at residues 63–81 (VFVTTCLIAAFGSIMMGLF). The Cytoplasmic portion of the chain corresponds to 82-83 (AN). Residues 84–100 (LPVALAPAMGLNAFFAF) form a discontinuously helical membrane-spanning segment. Topologically, residues 101-112 (VVVQAMGLPWQV) are periplasmic. Residues 113–132 (GMGAIFWGAIGLLLLTIFRV) form a helical membrane-spanning segment. Residues 133–144 (RYWMIANIPVSL) lie on the Cytoplasmic side of the membrane. The chain crosses the membrane as a helical span at residues 145–165 (RVGITSGIGLFIGMMGLKNAG). Over 166-181 (VIVANPETLVSIGNLT) the chain is Periplasmic. Residues 182 to 199 (SHSVLLGILGFFIIAILA) form a helical membrane-spanning segment. The Cytoplasmic portion of the chain corresponds to 200-203 (SRNI). The chain crosses the membrane as a helical span at residues 204–222 (HAAVLVSIVVTTLLGWMLG). The Periplasmic portion of the chain corresponds to 223–250 (DVHYNGIVSAPPSVMTVVGHVDLAGSFN). The helical transmembrane segment at 251–279 (LGLAGVIFSFMLVNLFDSSGTLIGVTDKA) threads the bilayer. At 280–292 (GLADEKGKFPRMK) the chain is on the cytoplasmic side. The chain crosses the membrane as a helical span at residues 293-308 (QALYVDSISSVTGSFI). At 309-310 (GT) the chain is on the periplasmic side. A discontinuously helical membrane pass occupies residues 311 to 326 (SSVTAYIESSSGVSVG). Residues 327 to 330 (GRTG) lie on the Cytoplasmic side of the membrane. A helical membrane pass occupies residues 331–345 (LTAVVVGLLFLLVIF). The Periplasmic portion of the chain corresponds to 346-356 (LSPLAGMVPGY). The helical transmembrane segment at 357 to 376 (AAAGALIYVGVLMTSSLARV) threads the bilayer. Residues 377–381 (NWQDL) are Cytoplasmic-facing. The segment at residues 382-417 (TESVPAFITAVMMPFSFSITEGIALGFISYCVMKIG) is an intramembrane region (discontinuously helical). At 418 to 445 (TGRLRDLSPCVIIVALLFILKIVFIDAH) the chain is on the cytoplasmic side.

The protein belongs to the nucleobase:cation symporter-2 (NCS2) (TC 2.A.40) family. Azg-like subfamily.

It is found in the cell inner membrane. With respect to regulation, internal adenine may inhibit transport. Functionally, high-affinity transporter for adenine. This chain is Adenine permease AdeP (adeP), found in Escherichia coli (strain K12).